The chain runs to 412 residues: Argininosuccinate synthase (412 aa).

Residues 10-18 (AYSGGLDTS) and alanine 36 each bind ATP. The L-citrulline site is built by tyrosine 87 and serine 92. The residue at position 87 (tyrosine 87) is a Phosphotyrosine. Lysine 112 carries the post-translational modification N6-acetyllysine. Tyrosine 113 carries the phosphotyrosine modification. Position 115 to 123 (115 to 123 (SHGATGKGN)) interacts with ATP. L-aspartate is bound by residues threonine 119, asparagine 123, and aspartate 124. Residue asparagine 123 coordinates L-citrulline. Position 127 (arginine 127) interacts with L-citrulline. An N6-acetyllysine; by CLOCK mark is found at lysine 165 and lysine 176. Phosphoserine is present on residues serine 177 and serine 180. Residues serine 180 and serine 189 each coordinate L-citrulline. Phosphoserine is present on serine 219. Positions 270 and 282 each coordinate L-citrulline.

It belongs to the argininosuccinate synthase family. Type 1 subfamily. As to quaternary structure, homotetramer. Interacts with NMRAL1. Interacts with CLOCK; in a circadian manner. Forms tissue-specific complexes with ASL, SLC7A1, HSP90AA1 and nitric oxide synthase NOS1, NOS2 or NOS3; the complex regulates cell-autonomous L-arginine synthesis and citrulline recycling while channeling extracellular L-arginine to nitric oxide synthesis pathway. Acetylated by CLOCK in a circadian manner which negatively regulates its enzyme activity. Deacetylated by histone deacetylases. In terms of tissue distribution, widely expressed.

It is found in the cytoplasm. The protein localises to the cytosol. The enzyme catalyses L-citrulline + L-aspartate + ATP = 2-(N(omega)-L-arginino)succinate + AMP + diphosphate + H(+). The protein operates within amino-acid biosynthesis; L-arginine biosynthesis; L-arginine from L-ornithine and carbamoyl phosphate: step 2/3. It participates in nitrogen metabolism; urea cycle; (N(omega)-L-arginino)succinate from L-aspartate and L-citrulline: step 1/1. One of the enzymes of the urea cycle, the metabolic pathway transforming neurotoxic amonia produced by protein catabolism into inocuous urea in the liver of ureotelic animals. Catalyzes the formation of arginosuccinate from aspartate, citrulline and ATP and together with ASL it is responsible for the biosynthesis of arginine in most body tissues. This is Argininosuccinate synthase from Mus musculus (Mouse).